The sequence spans 179 residues: ADP-ribosylation factor-like protein 5A (179 aa).

G2 carries the N-myristoyl glycine lipid modification. GTP contacts are provided by residues 23-30, 66-70, 125-128, and A159; these read GLDNAGKT, DIGGQ, and NKQD.

The protein belongs to the small GTPase superfamily. Arf family.

Lacks ADP-ribosylation enhancing activity. The sequence is that of ADP-ribosylation factor-like protein 5A (ARL5A) from Bos taurus (Bovine).